The chain runs to 561 residues: CWF19-like protein mug161 (561 aa).

Residues 286–338 (QQTNKFHKSKSSTALFKSKKDSSSSLNKMHKSESHSALNNLHKSESGTSLNNR) are disordered. Ser-296 is modified (phosphoserine). Thr-298 is subject to Phosphothreonine. 4 positions are modified to phosphoserine: Ser-317, Ser-319, Ser-331, and Ser-334. Residues 320–337 (HSALNNLHKSESGTSLNN) are compositionally biased toward polar residues.

The protein belongs to the CWF19 family.

The protein resides in the nucleus. In terms of biological role, has a role in meiosis. The sequence is that of CWF19-like protein mug161 (mug161) from Schizosaccharomyces pombe (strain 972 / ATCC 24843) (Fission yeast).